The sequence spans 544 residues: uncharacterized protein (544 aa).

An N-terminal signal peptide occupies residues M1–Y22.

This is an uncharacterized protein from Methanocaldococcus jannaschii (strain ATCC 43067 / DSM 2661 / JAL-1 / JCM 10045 / NBRC 100440) (Methanococcus jannaschii).